We begin with the raw amino-acid sequence, 242 residues long: uncharacterized protein (242 aa).

The first 17 residues, M1–A17, serve as a signal peptide directing secretion. N47, N86, N122, N159, and N178 each carry an N-linked (GlcNAc...) asparagine glycan. The disordered stretch occupies residues N176 to A214. The segment covering S180 to A214 has biased composition (low complexity). A218 carries the GPI-like-anchor amidated alanine lipid modification. A propeptide spans G219 to L242 (removed in mature form).

In terms of processing, the GPI-like anchor contains a phosphoceramide lipid group. The anchor position has not been determined.

It localises to the cell membrane. This is an uncharacterized protein from Aspergillus fumigatus (strain ATCC MYA-4609 / CBS 101355 / FGSC A1100 / Af293) (Neosartorya fumigata).